The following is an 884-amino-acid chain: E3 SUMO-protein ligase SIZ1 (884 aa).

Positions 11 to 45 (LSYFRIKELKDVLTQLGLSKQGKKQELVDRILTLL) constitute an SAP domain. The segment at 84 to 103 (LASKGQVSSDTSNLKVKGEP) is disordered. Residues 88-97 (GQVSSDTSNL) show a composition bias toward polar residues. Lys-100 participates in a covalent cross-link: Glycyl lysine isopeptide (Lys-Gly) (interchain with G-Cter in SUMO). The PHD-type zinc finger occupies 112–168 (KVRCVCGNSLETDSMIQCEDPRCHVWQHVGCVILPDKPMDGNPPLPESFYCEICRLT). Residues 346-429 (SDSDIEVVAD…FNRITSKMKH (84 aa)) form an SP-RING-type zinc finger. Zn(2+)-binding residues include Cys-379, His-381, Cys-402, and Cys-405. Lys-488 participates in a covalent cross-link: Glycyl lysine isopeptide (Lys-Gly) (interchain with G-Cter in SUMO). 3 disordered regions span residues 753 to 778 (PSLQIFLPTKPDASAQSGFKNQADMS), 792 to 824 (GDSASGNHGDPATTNGINSSHQMSTREGSMDTT), and 836 to 869 (DSRQDKAKKQRSDNPFSFPRQKRSNNEQDHQTRH). Composition is skewed to polar residues over residues 766-778 (SAQSGFKNQADMS) and 803-824 (ATTNGINSSHQMSTREGSMDTT). Basic and acidic residues predominate over residues 837–847 (SRQDKAKKQRS).

The protein belongs to the PIAS family. In terms of assembly, interacts (via PHD domain) with SCE1, GTE3 and GTE5. Post-translationally, autosumoylated at Lys-100 and Lys-488. In terms of tissue distribution, ubiquitous.

The protein resides in the nucleus speckle. Its pathway is protein modification; protein sumoylation. In terms of biological role, E3 SUMO protein ligase involved in regulation processes. Mediates SUMO/ attachment to PHR1, a MYB transcriptional activator controlling the phosphate deficiency responses. Functions as an upstream negative regulator of salicylic acid (SA) accumulation and subsequent SA-mediated systemic acquired resistance (SAR) signaling. Probably not involved in jasmonic acid (JA)-mediated defense response. Participates in abiotic stress-induced sumoylation. Controls heat shock-induced SUMO1 and SUMO2 conjugation and facilitates basal thermotolerance. Involved in freezing tolerance by mediating sumoylation of ICE1, a transcription activator of the cold signaling regulator CBF3/DREB1A. Acts as a positive regulator of drought stress tolerance. Acts as a floral repressor that promotes FLC expression by repressing FLD activity through sumoylation. Acts as a negative regulator of abscisic acid (ABA) signaling through ABI5 sumoylation. Mediates sumoylation of SCE1, GTE3 and GTE5. Functions as a negative regulator of SnRK1 signaling through sumoylation of several components of the SnRK1 complex. This chain is E3 SUMO-protein ligase SIZ1, found in Arabidopsis thaliana (Mouse-ear cress).